Reading from the N-terminus, the 689-residue chain is Methionine--tRNA ligase (689 aa).

Positions 15–25 match the 'HIGH' region motif; the sequence is PYANGPIHLGH. Residues Cys146, Cys149, Cys159, and Cys162 each coordinate Zn(2+). Residues 332 to 336 carry the 'KMSKS' region motif; it reads KMSKS. Lys335 serves as a coordination point for ATP. Positions 588–689 constitute a tRNA-binding domain; sequence DFAKIDLRIA…EGAQPGMRVK (102 aa).

Belongs to the class-I aminoacyl-tRNA synthetase family. MetG type 1 subfamily. Homodimer. Zn(2+) serves as cofactor.

It localises to the cytoplasm. The enzyme catalyses tRNA(Met) + L-methionine + ATP = L-methionyl-tRNA(Met) + AMP + diphosphate. Is required not only for elongation of protein synthesis but also for the initiation of all mRNA translation through initiator tRNA(fMet) aminoacylation. The polypeptide is Methionine--tRNA ligase (Shewanella baltica (strain OS223)).